The chain runs to 228 residues: Non-fluorescent flavoprotein (228 aa).

This sequence belongs to the bacterial luciferase oxidoreductase family. Homodimer. It depends on FMN as a cofactor.

This is Non-fluorescent flavoprotein (luxF) from Photobacterium leiognathi.